The chain runs to 311 residues: Lipoyl synthase (311 aa).

[4Fe-4S] cluster is bound by residues Cys-36, Cys-41, Cys-47, Cys-66, Cys-70, Cys-73, and Ser-280. Residues 51–269 form the Radical SAM core domain; it reads RDGPGTATFM…RVAESEFGFL (219 aa).

The protein belongs to the radical SAM superfamily. Lipoyl synthase family. [4Fe-4S] cluster is required as a cofactor.

It is found in the cytoplasm. It catalyses the reaction [[Fe-S] cluster scaffold protein carrying a second [4Fe-4S](2+) cluster] + N(6)-octanoyl-L-lysyl-[protein] + 2 oxidized [2Fe-2S]-[ferredoxin] + 2 S-adenosyl-L-methionine + 4 H(+) = [[Fe-S] cluster scaffold protein] + N(6)-[(R)-dihydrolipoyl]-L-lysyl-[protein] + 4 Fe(3+) + 2 hydrogen sulfide + 2 5'-deoxyadenosine + 2 L-methionine + 2 reduced [2Fe-2S]-[ferredoxin]. Its pathway is protein modification; protein lipoylation via endogenous pathway; protein N(6)-(lipoyl)lysine from octanoyl-[acyl-carrier-protein]: step 2/2. Functionally, catalyzes the radical-mediated insertion of two sulfur atoms into the C-6 and C-8 positions of the octanoyl moiety bound to the lipoyl domains of lipoate-dependent enzymes, thereby converting the octanoylated domains into lipoylated derivatives. This Halobacterium salinarum (strain ATCC 29341 / DSM 671 / R1) protein is Lipoyl synthase.